We begin with the raw amino-acid sequence, 213 residues long: Nicotinamidase (213 aa).

Residue Asp10 is the Proton acceptor of the active site. 3 residues coordinate Zn(2+): Asp52, His54, and His86. Residue Lys111 is part of the active site. Residue Cys156 is the Nucleophile of the active site.

Belongs to the isochorismatase family.

It catalyses the reaction nicotinamide + H2O = nicotinate + NH4(+). The catalysed reaction is pyrazinamide + H2O = pyrazine-2-carboxylate + NH4(+). It participates in cofactor biosynthesis; nicotinate biosynthesis; nicotinate from nicotinamide: step 1/1. Catalyzes the deamidation of nicotinamide (NAM) into nicotinate. Likely functions in the cyclical salvage pathway for production of NAD from nicotinamide. Functionally, is also able to hydrolyze the first-line antituberculous drug pyrazinamide (PZA) into pyrazinoic acid in vitro, but this reaction is not considered to be physiologically relevant. In Escherichia coli (strain K12), this protein is Nicotinamidase.